Consider the following 186-residue polypeptide: Lipid A palmitoyltransferase PagP (186 aa).

Residues 1–25 (MNVSKYVAIFSFVFIQLISVGKVFA) form the signal peptide. Catalysis depends on residues His58, Asp101, and Ser102.

It belongs to the lipid A palmitoyltransferase family. As to quaternary structure, homodimer.

The protein localises to the cell outer membrane. It carries out the reaction lipid A (E. coli) + a 1-hexadecanoyl-2-acyl-sn-glycero-3-phosphocholine = hepta-acyl lipid A (E. coli) + a 2-acyl-sn-glycero-3-phosphocholine. The catalysed reaction is lipid IIA + a 1-hexadecanoyl-2-acyl-sn-glycero-3-phosphocholine = lipid IIB + a 2-acyl-sn-glycero-3-phosphocholine. It catalyses the reaction lipid IVA (E. coli) + a 1-hexadecanoyl-2-acyl-sn-glycero-3-phosphocholine = lipid IVB (E. coli) + a 2-acyl-sn-glycero-3-phosphocholine. Its activity is regulated as follows. Inhibited by lauryldimethylamine oxide (LDAO) and dodecylphosphocholine (DPC). Its function is as follows. Transfers a palmitate residue from the sn-1 position of a phospholipid to the N-linked hydroxymyristate on the proximal unit of lipid A or its precursors. Phosphatidylglycerol (PtdGro), phosphatidylethanolamine (PtdEtn), phosphatidylserine (PtdSer) and phosphatidic acid (Ptd-OH) are all effective acyl donors. In Escherichia coli (strain K12), this protein is Lipid A palmitoyltransferase PagP.